The primary structure comprises 148 residues: 3-dehydroquinate dehydratase (148 aa).

Residue tyrosine 23 is the Proton acceptor of the active site. Substrate is bound by residues asparagine 75, histidine 81, and aspartate 88. The Proton donor role is filled by histidine 101. Substrate contacts are provided by residues 102–103 and arginine 112; that span reads LS.

The protein belongs to the type-II 3-dehydroquinase family. As to quaternary structure, homododecamer.

It carries out the reaction 3-dehydroquinate = 3-dehydroshikimate + H2O. The protein operates within metabolic intermediate biosynthesis; chorismate biosynthesis; chorismate from D-erythrose 4-phosphate and phosphoenolpyruvate: step 3/7. Catalyzes a trans-dehydration via an enolate intermediate. In Xylella fastidiosa (strain M23), this protein is 3-dehydroquinate dehydratase.